The following is a 629-amino-acid chain: MNATGAGYPLASLYIGDLHPDVTEAMLYEKFSPAGPIMSIRVCRDIATRRSLSYAYINFQQPADAERALDTMNFEVIKGRPIRIMWSQRDPGLRKSGVGNVFIKNLDESIDNKALYDTFSAFGNILSCKVVCDEHGSRGYGFVHFETHEAANRAIQTMNGMLLNDRKVFVGHFKSRRERELEYGAKVMEFTNVYIKNFGEDMDDKRLREIFSAFGNTLSVKVMMDDSGRSRGFGFVNYGNHEEAQKAVSEMNGKEVNGRMIYVGRAQKRIERQSELKRKFEQIKQERINRYQGVNLYVKNLDDGIDDDRLRKEFLPYGTITSAKVMTEGGHSKGFGFVCFSSPEEATKAVTEMNGRIVSTKPLYVALAQRKEERKAILTNQYMQRLATMRAMPGPLLGSFQQPANYFLSAMPQPPNRTFYSPNPVAPVRPAPQWASHQSRPPQYQPPTPLMRAVQPRRMSSNISTMKQASTQVPRVAQHSQRVANIGTQTAGARAQVNPSMMRTMPHYKYSCGVRNVQPIVSSTHLQQVMEPAVLMQGQEPLTASLLAGAPPQEQKQMLGERIYPVIHEMHPTLAGKITGMLLEIDNSELLHMLESPESLHSKVEEAVAVLQAHQAKENAQKSAQPSLI.

RRM domains lie at 11 to 89 (ASLY…WSQR), 99 to 175 (GNVF…HFKS), 191 to 268 (TNVY…RAQK), and 294 to 370 (VNLY…LAQR). Residues 539-616 (QEPLTASLLA…AVAVLQAHQA (78 aa)) form the PABC domain.

It belongs to the polyadenylate-binding protein type-1 family. In terms of assembly, interacts with dazl in an RNA-independent manner. The C-terminus can self-associate and also interact with the C-terminus of pabpc1, independently of RNA. RRM 1 and RRM 2 interact with both eif4g1 and paip1, and the C-terminus also interacts with paip1. Prior to oocyte maturation, found in a complex with dazl and pum2 proteins and spdy1 mRNA; pum2 dissociates from the complex during maturation. Interacts with the translation termination factor sup35/erf3. As to expression, expressed in adult testis, but at a reduced level compared to oocytes.

It is found in the cytoplasm. Functionally, binds and protects the poly(A) tail of mRNA with or without an AU-rich element (ARE) and prevents mRNA deadenylation. Stimulates the translation of mRNAs to which it is bound during early development. The protein is Embryonic polyadenylate-binding protein A (epabp-a) of Xenopus laevis (African clawed frog).